Reading from the N-terminus, the 379-residue chain is Leukocyte elastase inhibitor (379 aa).

N-acetylmethionine is present on Met1. An N6-acetyllysine mark is found at Lys137 and Lys177. The residue at position 300 (Ser300) is a Phosphoserine. The segment at 351-379 (NFTADHPFLFFIRHNSSGSILFLGRFSSP) is CARD-binding motif (CBM).

This sequence belongs to the serpin family. Ov-serpin subfamily. As to quaternary structure, monomer. Interacts (via C-terminus) with CASP1; CASP4 (via CARD domain) and CASP5; these interactions regulate the activity of inflammatory caspases. Interacts with PRTN3. Interacts with GZMH. As to expression, in human bone marrow, present in all CD45+ populations. Expression levels are highest in the neutrophil lineage, intermediate in monocytic, and lowest in lymphocytic lineage. Within the neutrophil lineage, expression is highest in promyelocytes.

The protein resides in the secreted. It is found in the cytoplasm. The protein localises to the cytolytic granule. Its subcellular location is the early endosome. Neutrophil serine protease inhibitor that plays an essential role in the regulation of the innate immune response, inflammation and cellular homeostasis. Acts primarily to protect the cell from proteases released in the cytoplasm during stress or infection. These proteases are important in killing microbes but when released from granules, these potent enzymes also destroy host proteins and contribute to mortality. Regulates the activity of the neutrophil proteases elastase, cathepsin G, proteinase-3, chymase, chymotrypsin, and kallikrein-3. Also acts as a potent intracellular inhibitor of GZMH by directly blocking its proteolytic activity. During inflammation, limits the activity of inflammatory caspases CASP1, CASP4 and CASP5 by suppressing their caspase-recruitment domain (CARD) oligomerization and enzymatic activation. When secreted, promotes the proliferation of beta-cells via its protease inhibitory function. In Homo sapiens (Human), this protein is Leukocyte elastase inhibitor (SERPINB1).